The primary structure comprises 308 residues: D-alanine--D-alanine ligase (308 aa).

An ATP-grasp domain is found at 104–304; sequence KQALVPHGIP…YAELVERIVE (201 aa). Position 131–187 (131–187) interacts with ATP; sequence LPRPYVLKPVNEGSSVGVAIVRDDSNYGNPISRDALGPWQQFDRLLAEPFIKGRELT. Positions 255, 271, and 273 each coordinate Mg(2+).

It belongs to the D-alanine--D-alanine ligase family. Requires Mg(2+) as cofactor. Mn(2+) is required as a cofactor.

The protein resides in the cytoplasm. The catalysed reaction is 2 D-alanine + ATP = D-alanyl-D-alanine + ADP + phosphate + H(+). Its pathway is cell wall biogenesis; peptidoglycan biosynthesis. Functionally, cell wall formation. The sequence is that of D-alanine--D-alanine ligase from Sphingopyxis alaskensis (strain DSM 13593 / LMG 18877 / RB2256) (Sphingomonas alaskensis).